A 566-amino-acid chain; its full sequence is Proline--tRNA ligase (566 aa).

Belongs to the class-II aminoacyl-tRNA synthetase family. ProS type 1 subfamily. As to quaternary structure, homodimer.

The protein localises to the cytoplasm. The enzyme catalyses tRNA(Pro) + L-proline + ATP = L-prolyl-tRNA(Pro) + AMP + diphosphate. Catalyzes the attachment of proline to tRNA(Pro) in a two-step reaction: proline is first activated by ATP to form Pro-AMP and then transferred to the acceptor end of tRNA(Pro). As ProRS can inadvertently accommodate and process non-cognate amino acids such as alanine and cysteine, to avoid such errors it has two additional distinct editing activities against alanine. One activity is designated as 'pretransfer' editing and involves the tRNA(Pro)-independent hydrolysis of activated Ala-AMP. The other activity is designated 'posttransfer' editing and involves deacylation of mischarged Ala-tRNA(Pro). The misacylated Cys-tRNA(Pro) is not edited by ProRS. In Campylobacter concisus (strain 13826), this protein is Proline--tRNA ligase.